Consider the following 100-residue polypeptide: Small ribosomal subunit protein bS20 (100 aa).

Belongs to the bacterial ribosomal protein bS20 family.

In terms of biological role, binds directly to 16S ribosomal RNA. The sequence is that of Small ribosomal subunit protein bS20 from Prochlorococcus marinus (strain MIT 9211).